Consider the following 348-residue polypeptide: E3 ubiquitin-protein ligase MARCHF9 (348 aa).

The disordered stretch occupies residues 48-96 (ARDGDGDEEEYYGSEPRARGLAGDKEPRAGPPPPPAPPPPPPGALDALS). Residues 63–75 (PRARGLAGDKEPR) are compositionally biased toward basic and acidic residues. Pro residues predominate over residues 76–90 (AGPPPPPAPPPPPPG). The segment at 102–162 (DSGLRTPQCR…ELCYFKYQVL (61 aa)) adopts an RING-CH-type zinc-finger fold. Zn(2+)-binding residues include cysteine 110, cysteine 113, cysteine 126, cysteine 128, histidine 136, cysteine 139, cysteine 152, and cysteine 155. The next 2 membrane-spanning stretches (helical) occupy residues 185-205 (IAAI…LIWS) and 219-239 (LFQI…GLIV). 2 disordered regions span residues 272 to 304 (GDTG…AAQR) and 328 to 348 (PPDA…VTTV).

As to quaternary structure, homodimer.

It is found in the golgi apparatus membrane. The protein resides in the lysosome membrane. The enzyme catalyses S-ubiquitinyl-[E2 ubiquitin-conjugating enzyme]-L-cysteine + [acceptor protein]-L-lysine = [E2 ubiquitin-conjugating enzyme]-L-cysteine + N(6)-ubiquitinyl-[acceptor protein]-L-lysine.. It participates in protein modification; protein ubiquitination. In terms of biological role, E3 ubiquitin-protein ligase that may mediate ubiquitination of MHC-I, CD4 and ICAM1, and promote their subsequent endocytosis and sorting to lysosomes via multivesicular bodies. E3 ubiquitin ligases accept ubiquitin from an E2 ubiquitin-conjugating enzyme in the form of a thioester and then directly transfer the ubiquitin to targeted substrates. The sequence is that of E3 ubiquitin-protein ligase MARCHF9 (Marchf9) from Mus musculus (Mouse).